We begin with the raw amino-acid sequence, 157 residues long: tRNA (cytidine(34)-2'-O)-methyltransferase (157 aa).

Positions 78, 100, 122, and 130 each coordinate S-adenosyl-L-methionine.

The protein belongs to the class IV-like SAM-binding methyltransferase superfamily. RNA methyltransferase TrmH family. TrmL subfamily. In terms of assembly, homodimer.

The protein localises to the cytoplasm. The enzyme catalyses cytidine(34) in tRNA + S-adenosyl-L-methionine = 2'-O-methylcytidine(34) in tRNA + S-adenosyl-L-homocysteine + H(+). It carries out the reaction 5-carboxymethylaminomethyluridine(34) in tRNA(Leu) + S-adenosyl-L-methionine = 5-carboxymethylaminomethyl-2'-O-methyluridine(34) in tRNA(Leu) + S-adenosyl-L-homocysteine + H(+). Functionally, methylates the ribose at the nucleotide 34 wobble position in the two leucyl isoacceptors tRNA(Leu)(CmAA) and tRNA(Leu)(cmnm5UmAA). Catalyzes the methyl transfer from S-adenosyl-L-methionine to the 2'-OH of the wobble nucleotide. The polypeptide is tRNA (cytidine(34)-2'-O)-methyltransferase (Escherichia coli O6:H1 (strain CFT073 / ATCC 700928 / UPEC)).